The sequence spans 154 residues: 6,7-dimethyl-8-ribityllumazine synthase (154 aa).

5-amino-6-(D-ribitylamino)uracil-binding positions include F21, 55–57, and 79–81; these read AFE and CVI. 84 to 85 is a (2S)-2-hydroxy-3-oxobutyl phosphate binding site; the sequence is AT. H87 functions as the Proton donor in the catalytic mechanism. F112 lines the 5-amino-6-(D-ribitylamino)uracil pocket. A (2S)-2-hydroxy-3-oxobutyl phosphate-binding site is contributed by R126.

It belongs to the DMRL synthase family. In terms of assembly, forms an icosahedral capsid composed of 60 subunits, arranged as a dodecamer of pentamers.

It catalyses the reaction (2S)-2-hydroxy-3-oxobutyl phosphate + 5-amino-6-(D-ribitylamino)uracil = 6,7-dimethyl-8-(1-D-ribityl)lumazine + phosphate + 2 H2O + H(+). It participates in cofactor biosynthesis; riboflavin biosynthesis; riboflavin from 2-hydroxy-3-oxobutyl phosphate and 5-amino-6-(D-ribitylamino)uracil: step 1/2. Its function is as follows. Catalyzes the formation of 6,7-dimethyl-8-ribityllumazine by condensation of 5-amino-6-(D-ribitylamino)uracil with 3,4-dihydroxy-2-butanone 4-phosphate. This is the penultimate step in the biosynthesis of riboflavin. The sequence is that of 6,7-dimethyl-8-ribityllumazine synthase from Staphylococcus aureus (strain MRSA252).